The primary structure comprises 417 residues: Ig-like V-type domain-containing protein FAM187A (417 aa).

The N-terminal stretch at 1-18 is a signal peptide; the sequence is MSLAHTTVLLWAWGSLQA. Residues 19–377 lie on the Extracellular side of the membrane; that stretch reads FEIVEKESVF…ASLSDPETRT (359 aa). N-linked (GlcNAc...) asparagine glycans are attached at residues Asn-248 and Asn-318. In terms of domain architecture, Ig-like V-type spans 268–362; sequence PWVPQVPIQF…IAGFRLGVIT (95 aa). The cysteines at positions 290 and 346 are disulfide-linked. Residues 378 to 398 traverse the membrane as a helical segment; sequence AIELTLMGYLLITIFFITIHL. Residues 399–417 lie on the Cytoplasmic side of the membrane; sequence CRCCCQSRCCPNFSAQTLL.

This sequence belongs to the FAM187 family.

The protein resides in the membrane. The chain is Ig-like V-type domain-containing protein FAM187A (Fam187a) from Mus musculus (Mouse).